The sequence spans 603 residues: MSDSPQNPGPSSLKIYFRLLGYVKPYIGMFLLSIVGFLIFASTQPMLAGILKYFVDGLSNPDAALFPNVQWPWLRDLHLVYAVPLLIILIAAWQGLGSFLGNFFLAKVSLGLVHDLRVALFNKLLVLPNRYFDTHSSGHLISRITFNVTMVTGAATDAIKVVIREGLTVVFLFLYLLWMNWKLTLVMLAILPVIAVMVTTASRKFRKQSKKIQVAMGDVTHVASETIQGYRVVRSFGGEAYEEKRFLDASQSNTDKQLRMTKTGAVYTPMLQLVIYVAMAILMFLVLWLRGDASAGDLVAYITAAGLLPKPIRQLSEVSSTVQRGVAGAESIFEQLDEAAEEDQGTVEKERVSGRLEVRNLSFRYPGTDKQVLDDISFIAEPGQMIALVGRSGSGKSTLANLVPRFYQHNDGKILLDGVEVEDYRLRNLRRHIALVTQQVTLFNDSVANNIAYGDLAGAPREEIERAAKAANAKEFIDNLPQGFDTEVGENGVLLSGGQRQRLAIARALLKDAPLLILDEATSALDTESERHIQAALDEVMKGRTTLVIAHRLSTIEKADLILVMDQGQIVERGSHAELLAQNGHYARLHAMGLDEQAPAPVG.

Helical transmembrane passes span Leu-20 to Phe-40, Leu-79 to Phe-99, Val-170 to Ile-190, and Pro-269 to Leu-289. Positions Leu-31–Arg-324 constitute an ABC transmembrane type-1 domain. One can recognise an ABC transporter domain in the interval Leu-356 to Met-592. ATP is bound at residue Gly-390 to Ser-397.

Belongs to the ABC transporter superfamily. Lipid exporter (TC 3.A.1.106) family. As to quaternary structure, homodimer.

It localises to the cell inner membrane. It catalyses the reaction ATP + H2O + lipid A-core oligosaccharideSide 1 = ADP + phosphate + lipid A-core oligosaccharideSide 2.. Its function is as follows. Involved in lipopolysaccharide (LPS) biosynthesis. Translocates lipid A-core from the inner to the outer leaflet of the inner membrane. Transmembrane domains (TMD) form a pore in the inner membrane and the ATP-binding domain (NBD) is responsible for energy generation. The protein is ATP-dependent lipid A-core flippase of Pseudomonas aeruginosa (strain ATCC 15692 / DSM 22644 / CIP 104116 / JCM 14847 / LMG 12228 / 1C / PRS 101 / PAO1).